Reading from the N-terminus, the 65-residue chain is DNA gyrase inhibitor YacG (65 aa).

Residues cysteine 9, cysteine 12, cysteine 28, and cysteine 32 each contribute to the Zn(2+) site. The disordered stretch occupies residues 43-65; that stretch reads EEKRIPSQSENSDSDDWSGQPEQ.

Belongs to the DNA gyrase inhibitor YacG family. In terms of assembly, interacts with GyrB. Requires Zn(2+) as cofactor.

Functionally, inhibits all the catalytic activities of DNA gyrase by preventing its interaction with DNA. Acts by binding directly to the C-terminal domain of GyrB, which probably disrupts DNA binding by the gyrase. This chain is DNA gyrase inhibitor YacG, found in Photorhabdus laumondii subsp. laumondii (strain DSM 15139 / CIP 105565 / TT01) (Photorhabdus luminescens subsp. laumondii).